The following is an 83-amino-acid chain: U15-theraphotoxin-Cg1a (83 aa).

The signal sequence occupies residues 1–21 (MKAAILLAFAGLALLSVICHA). Positions 22–49 (SENVEQDSFEEVFSAIFAMEDDLKPKER) are excised as a propeptide. 3 disulfides stabilise this stretch: C51/C66, C58/C71, and C65/C77. A81 is modified (alanine amide).

It belongs to the neurotoxin 10 (Hwtx-1) family. 66 (Jztx-24) subfamily. As to expression, expressed by the venom gland.

Its subcellular location is the secreted. Its function is as follows. Probable ion channel inhibitor. In Chilobrachys guangxiensis (Chinese earth tiger tarantula), this protein is U15-theraphotoxin-Cg1a.